The chain runs to 312 residues: Protoheme IX farnesyltransferase (312 aa).

9 helical membrane-spanning segments follow: residues Val29–Asn49, Pro50–Leu70, Ile90–Phe110, Leu117–Val137, Ile150–Gly170, Val177–Phe197, Ala223–Ala243, Gly248–Ala268, and Leu292–Phe312.

This sequence belongs to the UbiA prenyltransferase family. Protoheme IX farnesyltransferase subfamily.

The protein localises to the cell inner membrane. It catalyses the reaction heme b + (2E,6E)-farnesyl diphosphate + H2O = Fe(II)-heme o + diphosphate. The protein operates within porphyrin-containing compound metabolism; heme O biosynthesis; heme O from protoheme: step 1/1. Functionally, converts heme B (protoheme IX) to heme O by substitution of the vinyl group on carbon 2 of heme B porphyrin ring with a hydroxyethyl farnesyl side group. The protein is Protoheme IX farnesyltransferase of Brucella anthropi (strain ATCC 49188 / DSM 6882 / CCUG 24695 / JCM 21032 / LMG 3331 / NBRC 15819 / NCTC 12168 / Alc 37) (Ochrobactrum anthropi).